The primary structure comprises 282 residues: Probable transcription factor At1g66420 (282 aa).

The segment at 33–73 (SKKNEEFCGGSGKVQPSEMKRRSEGTSTDMTSKRAKKVSAE) is disordered.

It belongs to the GeBP family.

In Arabidopsis thaliana (Mouse-ear cress), this protein is Probable transcription factor At1g66420.